The primary structure comprises 301 residues: Protoheme IX farnesyltransferase (301 aa).

Transmembrane regions (helical) follow at residues 29-49, 51-71, 96-118, 123-143, 151-171, 177-197, 223-243, 244-264, and 281-301; these read VVAL…PGVV, IVPL…AAAF, VSIA…VLYV, LTAW…TAYL, IVVG…AVTG, ALLL…ALAI, CIFL…LVGM, CGPV…YKAW, and FSIY…YLWL.

Belongs to the UbiA prenyltransferase family. Protoheme IX farnesyltransferase subfamily.

It is found in the cell inner membrane. It carries out the reaction heme b + (2E,6E)-farnesyl diphosphate + H2O = Fe(II)-heme o + diphosphate. The protein operates within porphyrin-containing compound metabolism; heme O biosynthesis; heme O from protoheme: step 1/1. Functionally, converts heme B (protoheme IX) to heme O by substitution of the vinyl group on carbon 2 of heme B porphyrin ring with a hydroxyethyl farnesyl side group. This is Protoheme IX farnesyltransferase from Shewanella halifaxensis (strain HAW-EB4).